The following is a 170-amino-acid chain: Putative 3-methyladenine DNA glycosylase (170 aa).

It belongs to the DNA glycosylase MPG family.

This is Putative 3-methyladenine DNA glycosylase from Sodalis glossinidius.